Here is a 268-residue protein sequence, read N- to C-terminus: UPF0328 protein ECU03_0040 (268 aa).

The protein belongs to the UPF0328 family.

The polypeptide is UPF0328 protein ECU03_0040 (Encephalitozoon cuniculi (strain GB-M1) (Microsporidian parasite)).